Consider the following 177-residue polypeptide: Transcription termination/antitermination protein NusG (177 aa).

Residues 126–156 enclose the KOW domain; the sequence is PGETVRVIDGPFADFNGVVEEVNYEKSRIQV.

It belongs to the NusG family.

Its function is as follows. Participates in transcription elongation, termination and antitermination. The polypeptide is Transcription termination/antitermination protein NusG (Pseudomonas aeruginosa (strain ATCC 15692 / DSM 22644 / CIP 104116 / JCM 14847 / LMG 12228 / 1C / PRS 101 / PAO1)).